The sequence spans 121 residues: Large ribosomal subunit protein bL12 (121 aa).

This sequence belongs to the bacterial ribosomal protein bL12 family. Homodimer. Part of the ribosomal stalk of the 50S ribosomal subunit. Forms a multimeric L10(L12)X complex, where L10 forms an elongated spine to which 2 to 4 L12 dimers bind in a sequential fashion. Binds GTP-bound translation factors.

In terms of biological role, forms part of the ribosomal stalk which helps the ribosome interact with GTP-bound translation factors. Is thus essential for accurate translation. This Tolumonas auensis (strain DSM 9187 / NBRC 110442 / TA 4) protein is Large ribosomal subunit protein bL12.